The primary structure comprises 721 residues: Fatty acid oxidation complex subunit alpha (721 aa).

The segment at 1–190 (MIYEGKAITV…KVGAVDAVVA (190 aa)) is enoyl-CoA hydratase/isomerase. Residue D297 coordinates substrate. Residues 312-721 (KDVKQAAVLG…SFFGQASSEE (410 aa)) are 3-hydroxyacyl-CoA dehydrogenase. NAD(+)-binding positions include M325, D344, 401-403 (VVE), K408, and S430. H451 serves as the catalytic For 3-hydroxyacyl-CoA dehydrogenase activity. N454 is an NAD(+) binding site. N501 and Y660 together coordinate substrate.

In the N-terminal section; belongs to the enoyl-CoA hydratase/isomerase family. This sequence in the C-terminal section; belongs to the 3-hydroxyacyl-CoA dehydrogenase family. In terms of assembly, heterotetramer of two alpha chains (FadB) and two beta chains (FadA).

The catalysed reaction is a (3S)-3-hydroxyacyl-CoA + NAD(+) = a 3-oxoacyl-CoA + NADH + H(+). It catalyses the reaction a (3S)-3-hydroxyacyl-CoA = a (2E)-enoyl-CoA + H2O. It carries out the reaction a 4-saturated-(3S)-3-hydroxyacyl-CoA = a (3E)-enoyl-CoA + H2O. The enzyme catalyses (3S)-3-hydroxybutanoyl-CoA = (3R)-3-hydroxybutanoyl-CoA. The catalysed reaction is a (3Z)-enoyl-CoA = a 4-saturated (2E)-enoyl-CoA. It catalyses the reaction a (3E)-enoyl-CoA = a 4-saturated (2E)-enoyl-CoA. Its pathway is lipid metabolism; fatty acid beta-oxidation. Involved in the aerobic and anaerobic degradation of long-chain fatty acids via beta-oxidation cycle. Catalyzes the formation of 3-oxoacyl-CoA from enoyl-CoA via L-3-hydroxyacyl-CoA. It can also use D-3-hydroxyacyl-CoA and cis-3-enoyl-CoA as substrate. The chain is Fatty acid oxidation complex subunit alpha from Pseudomonas syringae pv. syringae (strain B728a).